The following is a 247-amino-acid chain: ATP synthase subunit a, chloroplastic (247 aa).

The next 5 membrane-spanning stretches (helical) occupy residues 38 to 58, 95 to 115, 134 to 154, 199 to 219, and 220 to 240; these read QVLITSWVVIAILLISTILVV, VPFIGTLFLFIFVSNWSGALL, INTTVALALLTSVAYFYAGIS, LVVVVLVSLVPLVVPIPVMFL, and GLFTSGIQALIFATLAAAYIG.

It belongs to the ATPase A chain family. In terms of assembly, F-type ATPases have 2 components, CF(1) - the catalytic core - and CF(0) - the membrane proton channel. CF(1) has five subunits: alpha(3), beta(3), gamma(1), delta(1), epsilon(1). CF(0) has four main subunits: a, b, b' and c.

Its subcellular location is the plastid. It localises to the chloroplast thylakoid membrane. In terms of biological role, key component of the proton channel; it plays a direct role in the translocation of protons across the membrane. The chain is ATP synthase subunit a, chloroplastic from Pisum sativum (Garden pea).